A 225-amino-acid polypeptide reads, in one-letter code: Small ribosomal subunit protein uS3 (225 aa).

The 71-residue stretch at 39 to 109 (IYRFFNKFTR…ELKLNIEVVN (71 aa)) folds into the KH type-2 domain.

Belongs to the universal ribosomal protein uS3 family. Part of the 30S ribosomal subunit. Forms a tight complex with proteins S10 and S14.

Its function is as follows. Binds the lower part of the 30S subunit head. Binds mRNA in the 70S ribosome, positioning it for translation. In Mycoplasma mobile (strain ATCC 43663 / 163K / NCTC 11711) (Mesomycoplasma mobile), this protein is Small ribosomal subunit protein uS3.